Reading from the N-terminus, the 927-residue chain is UPF0182 protein bll7333 (927 aa).

7 consecutive transmembrane segments (helical) span residues 17–37, 65–85, 134–154, 185–205, 220–240, 264–284, and 297–317; these read AVVG…LLAL, AVVF…NGWL, LALL…QFVY, WMML…LVHG, VIAH…WSFG, VGLP…LAAW, and AAFL…PVLF.

Belongs to the UPF0182 family.

Its subcellular location is the cell membrane. The polypeptide is UPF0182 protein bll7333 (Bradyrhizobium diazoefficiens (strain JCM 10833 / BCRC 13528 / IAM 13628 / NBRC 14792 / USDA 110)).